A 315-amino-acid polypeptide reads, in one-letter code: Glutaminase (315 aa).

Substrate-binding residues include serine 70, asparagine 120, glutamate 166, asparagine 173, tyrosine 197, tyrosine 249, and valine 267.

This sequence belongs to the glutaminase family. Homotetramer.

It carries out the reaction L-glutamine + H2O = L-glutamate + NH4(+). This is Glutaminase from Rhizobium meliloti (strain 1021) (Ensifer meliloti).